Here is a 212-residue protein sequence, read N- to C-terminus: ER lumen protein-retaining receptor 1 (212 aa).

At 1-4 the chain is on the lumenal side; the sequence is MNLF. A helical membrane pass occupies residues 5–24; sequence RFLGDLSHLLAIILLLLKIW. The Cytoplasmic portion of the chain corresponds to 25-32; it reads KSRSCAGI. Residues 33 to 52 traverse the membrane as a helical segment; the sequence is SGKSQVLFAVVFTARYLDLF. The segment at 47–48 is interaction with the K-D-E-L motif on target proteins; the sequence is RY. Residues 53 to 58 are Lumenal-facing; that stretch reads TNYISL. The chain crosses the membrane as a helical span at residues 59–79; that stretch reads YNTCMKVVYIACSFTTVWMIY. The Cytoplasmic segment spans residues 80–92; the sequence is SKFKATYDGNHDT. Residues 93-110 form a helical membrane-spanning segment; the sequence is FRVEFLVVPTAVLAFLVN. Residues 111 to 116 are Lumenal-facing; it reads HDFTPL. The helical transmembrane segment at 117 to 135 threads the bilayer; the sequence is EILWTFSIYLESVAILPQL. The Cytoplasmic segment spans residues 136–149; that stretch reads FMVSKTGEAETITS. A helical membrane pass occupies residues 150 to 168; the sequence is HYLFALGVYRTLYLFNWIW. Positions 159 to 169 are interaction with the K-D-E-L motif on target proteins; the sequence is RTLYLFNWIWR. Topologically, residues 169 to 178 are lumenal; sequence RYHFEGFFDL. The chain crosses the membrane as a helical span at residues 179 to 199; the sequence is IAIVAGLVQTVLYCDFFYLYI. Residues 200-212 are Cytoplasmic-facing; sequence TKVLKGKKLSLPA. The important for recycling of cargo proteins with the sequence motif K-D-E-L from the Golgi to the endoplasmic reticulum stretch occupies residues 204–207; that stretch reads KGKK. Ser-209 carries the phosphoserine; by PKA modification.

This sequence belongs to the ERD2 family. As to quaternary structure, upon ligand binding the receptor oligomerizes and interacts with components of the transport machinery such as ARFGAP1 and ARF1. Post-translationally, phosphorylation by PKA at Ser-209 is required for endoplasmic reticulum retention function.

Its subcellular location is the golgi apparatus membrane. The protein localises to the cytoplasmic vesicle. The protein resides in the COPI-coated vesicle membrane. It localises to the endoplasmic reticulum membrane. It is found in the endoplasmic reticulum-Golgi intermediate compartment membrane. Functionally, receptor for the C-terminal sequence motif K-D-E-L that is present on endoplasmic reticulum resident proteins and that mediates their recycling from the Golgi back to the endoplasmic reticulum. This Rattus norvegicus (Rat) protein is ER lumen protein-retaining receptor 1 (Kdelr1).